The following is a 73-amino-acid chain: Large ribosomal subunit protein bL31 (73 aa).

Belongs to the bacterial ribosomal protein bL31 family. Type A subfamily. As to quaternary structure, part of the 50S ribosomal subunit.

Its function is as follows. Binds the 23S rRNA. The protein is Large ribosomal subunit protein bL31 of Sinorhizobium fredii (strain NBRC 101917 / NGR234).